The chain runs to 314 residues: Taste receptor type 2 member 42 (314 aa).

Over 1 to 7 (MATELDK) the chain is Extracellular. Residues 8 to 28 (IFLILEIAEFIIGMLGNVFIG) form a helical membrane-spanning segment. At 29 to 50 (LVNCSEGIKNQKVFSADFILTC) the chain is on the cytoplasmic side. A helical transmembrane segment spans residues 51-71 (LAISTIGQLFVILFDSFLVGL). Over 72-101 (ASHLYTTYRLGKPVIMLWHMTNHLTTWLAT) the chain is Extracellular. A helical membrane pass occupies residues 102–122 (CLSIFYFFKIAHFPHSLFLWL). Residues 123 to 127 (RWRMN) are Cytoplasmic-facing. A helical membrane pass occupies residues 128-148 (GMIVMLLILSLFLLIFDSLVL). Over 149-187 (EIFIDISLNIIDKSNLTLYLDESKTLYDKLSILKTLLSL) the chain is Extracellular. An N-linked (GlcNAc...) asparagine glycan is attached at asparagine 163. The chain crosses the membrane as a helical span at residues 188 to 208 (TSFIPFSLSLTSLLFFFLSLV). Over 209-238 (RHTRNLKLSSLGSRDSSTEAHRRAMKMVMS) the chain is Cytoplasmic. A helical transmembrane segment spans residues 239–259 (FLFLFIVHFFSLQVANWIFFM). Residues 260 to 265 (LWNNKY) lie on the Extracellular side of the membrane. A helical transmembrane segment spans residues 266-286 (IKFAMLALNAFPSCHSFILIL). At 287 to 314 (GNSKLRQTAVRLLWHLRNYTKTPNALPL) the chain is on the cytoplasmic side.

Belongs to the G-protein coupled receptor T2R family.

Its subcellular location is the membrane. Its function is as follows. Receptor that may play a role in the perception of bitterness and is gustducin-linked. May play a role in sensing the chemical composition of the gastrointestinal content. The activity of this receptor may stimulate alpha gustducin, mediate PLC-beta-2 activation and lead to the gating of TRPM5. The polypeptide is Taste receptor type 2 member 42 (TAS2R42) (Pan paniscus (Pygmy chimpanzee)).